The primary structure comprises 194 residues: Large ribosomal subunit protein bL9 (194 aa).

Low complexity predominate over residues 166–184; it reads AENQAQADEQAGELAAAAA. The disordered stretch occupies residues 166 to 194; it reads AENQAQADEQAGELAAAAAERGDMGGDEE. Basic and acidic residues predominate over residues 185–194; the sequence is ERGDMGGDEE.

Belongs to the bacterial ribosomal protein bL9 family.

In terms of biological role, binds to the 23S rRNA. The sequence is that of Large ribosomal subunit protein bL9 from Hyphomonas neptunium (strain ATCC 15444).